The primary structure comprises 404 residues: GTPase Obg (404 aa).

One can recognise an Obg domain in the interval 1–159; the sequence is MKFIDEARIE…RALRLELKVL (159 aa). The interval 22–43 is disordered; sequence SFRREKFIPRGGPDGGDGGRGG. Gly residues predominate over residues 33-43; it reads GPDGGDGGRGG. In terms of domain architecture, OBG-type G spans 160–334; sequence ADVGLLGMPN…LVFAIQDFLD (175 aa). GTP-binding positions include 166-173, 191-195, 213-216, 284-287, and 315-317; these read GMPNAGKS, FTTLA, DIPG, NKLD, and SAL. Positions 173 and 193 each coordinate Mg(2+). Positions 373–404 are disordered; it reads LLAEGETGTGDDGRDGNENDPADEQDTNRPNH.

It belongs to the TRAFAC class OBG-HflX-like GTPase superfamily. OBG GTPase family. In terms of assembly, monomer. It depends on Mg(2+) as a cofactor.

Its subcellular location is the cytoplasm. Functionally, an essential GTPase which binds GTP, GDP and possibly (p)ppGpp with moderate affinity, with high nucleotide exchange rates and a fairly low GTP hydrolysis rate. Plays a role in control of the cell cycle, stress response, ribosome biogenesis and in those bacteria that undergo differentiation, in morphogenesis control. The polypeptide is GTPase Obg (Aromatoleum aromaticum (strain DSM 19018 / LMG 30748 / EbN1) (Azoarcus sp. (strain EbN1))).